The primary structure comprises 601 residues: Phosphomethylpyrimidine synthase (601 aa).

2 disordered regions span residues 1–31 (MTNKDARTPASSQTGEALASPQGDQEAGKSI) and 100–141 (AGRP…RDGQ). A compositionally biased stretch (basic and acidic residues) spans 100–112 (AGRPVRPEDDGIK). Residues asparagine 208, methionine 237, tyrosine 266, histidine 302, 322–324 (SRG), 363–366 (DGLR), and glutamate 402 each bind substrate. Position 406 (histidine 406) interacts with Zn(2+). A substrate-binding site is contributed by tyrosine 429. Histidine 470 contributes to the Zn(2+) binding site. [4Fe-4S] cluster contacts are provided by cysteine 550, cysteine 553, and cysteine 558.

The protein belongs to the ThiC family. Requires [4Fe-4S] cluster as cofactor.

It carries out the reaction 5-amino-1-(5-phospho-beta-D-ribosyl)imidazole + S-adenosyl-L-methionine = 4-amino-2-methyl-5-(phosphooxymethyl)pyrimidine + CO + 5'-deoxyadenosine + formate + L-methionine + 3 H(+). The protein operates within cofactor biosynthesis; thiamine diphosphate biosynthesis. Catalyzes the synthesis of the hydroxymethylpyrimidine phosphate (HMP-P) moiety of thiamine from aminoimidazole ribotide (AIR) in a radical S-adenosyl-L-methionine (SAM)-dependent reaction. This is Phosphomethylpyrimidine synthase from Streptomyces avermitilis (strain ATCC 31267 / DSM 46492 / JCM 5070 / NBRC 14893 / NCIMB 12804 / NRRL 8165 / MA-4680).